A 111-amino-acid polypeptide reads, in one-letter code: Secreted RxLR effector protein 159 (111 aa).

The N-terminal stretch at 1-21 is a signal peptide; sequence MRGAYYVAIAFLVAASSRTAA. The RxLR-dEER motif lies at 50-71; that stretch reads RVLRGSRDLKDKLAVYANDEQR. Residue Asn-81 is glycosylated (N-linked (GlcNAc...) asparagine).

It belongs to the RxLR effector family.

The protein resides in the secreted. It localises to the host nucleus. Its subcellular location is the host cytoplasm. Its function is as follows. Secreted effector that completely suppresses the host cell death induced by cell death-inducing proteins. The polypeptide is Secreted RxLR effector protein 159 (Plasmopara viticola (Downy mildew of grapevine)).